The chain runs to 157 residues: DNA gyrase inhibitor (157 aa).

Belongs to the DNA gyrase inhibitor family. As to quaternary structure, interacts with DNA gyrase.

The protein resides in the cytoplasm. In terms of biological role, inhibits the supercoiling activity of DNA gyrase. Acts by inhibiting DNA gyrase at an early step, prior to (or at the step of) binding of DNA by the gyrase. It protects cells against toxins that target DNA gyrase, by inhibiting activity of these toxins and reducing the formation of lethal double-strand breaks in the cell. This chain is DNA gyrase inhibitor, found in Shigella boydii serotype 18 (strain CDC 3083-94 / BS512).